The primary structure comprises 515 residues: Bifunctional solanapyrone synthase (515 aa).

An N-terminal signal peptide occupies residues 1–25 (MRLIILNLLSLGITPSVVGHSGPHR). N-linked (GlcNAc...) asparagine glycosylation occurs at N66. In terms of domain architecture, FAD-binding PCMH-type spans 91–261 (APKNPACIYT…THIVQRTYPL (171 aa)). H128 is modified (pros-8alpha-FAD histidine). N-linked (GlcNAc...) asparagine glycosylation is found at N274 and N355.

It belongs to the oxygen-dependent FAD-linked oxidoreductase family. FAD is required as a cofactor.

It carries out the reaction prosolanapyrone II + O2 = prosolanapyrone III + H2O2. The enzyme catalyses prosolanapyrone III = (-)-solanapyrone A. The catalysed reaction is prosolanapyrone III = solanapyrone D. It participates in phytotoxin biosynthesis. Bifunctional solanapyrone synthase; part of the gene cluster that mediates the biosynthesis of the phytotoxin solanapyrone, a causal agent of early blight disease of potato and tomato. The prosolanapyrone synthase sol1 is a polyketide synthase that produces the octaketide desmethylprosolanapyrone I via sequential condensations of 7 malonyl-CoA units with one acetyl-CoA unit, and one methylation step. The octaketide backbone is further methylated by the sol2 O-methyltransferase to yield prosolanapyrone I. Prosolanapyrone I is hydroxylated to prosolanapyrone II by the cytochrome P450 monooxygenase sol6. The solanapyrone synthase sol5 then catalyzes the oxidation of prosolanapyrone II and the subsequent Diels Alder cycloisomerization of the product prosolanapyrone III to solanapyrones A and D. Solanapyrones A and D are then converted into solanapyrones B and E, respectively, by the sol3 dehydrogenase. This chain is Bifunctional solanapyrone synthase (sol5), found in Alternaria solani.